Here is a 336-residue protein sequence, read N- to C-terminus: Fructokinase-2 (336 aa).

It belongs to the carbohydrate kinase PfkB family. In terms of tissue distribution, expressed in stem, sheaths, anthers, and panicles (at protein level).

It catalyses the reaction D-fructose + ATP = D-fructose 6-phosphate + ADP + H(+). It participates in glycan biosynthesis; starch biosynthesis. With respect to regulation, strongly inhibited at high fructose concentration. Functionally, may play an important role in maintaining the flux of carbon towards starch formation in endosperm. May also be involved in a sugar-sensing pathway. This Oryza sativa subsp. japonica (Rice) protein is Fructokinase-2 (FRK2).